A 318-amino-acid chain; its full sequence is Ankyrin repeat domain-containing protein 1 (318 aa).

Residues Ala-37 to Arg-77 are a coiled coil. ANK repeat units lie at residues Val-118–Thr-147, Tyr-151–Phe-180, Leu-184–Ala-213, Leu-217–Ala-246, Glu-250–Ile-279, and Ala-283–His-314.

Its subcellular location is the nucleus. Its function is as follows. May act as a nuclear transcription factor that negatively regulates the expression of cardiac genes. The protein is Ankyrin repeat domain-containing protein 1 (ankrd1) of Xenopus tropicalis (Western clawed frog).